A 314-amino-acid polypeptide reads, in one-letter code: Methionyl-tRNA formyltransferase (314 aa).

A (6S)-5,6,7,8-tetrahydrofolate-binding site is contributed by 110-113 (SLLP).

Belongs to the Fmt family.

It carries out the reaction L-methionyl-tRNA(fMet) + (6R)-10-formyltetrahydrofolate = N-formyl-L-methionyl-tRNA(fMet) + (6S)-5,6,7,8-tetrahydrofolate + H(+). Functionally, attaches a formyl group to the free amino group of methionyl-tRNA(fMet). The formyl group appears to play a dual role in the initiator identity of N-formylmethionyl-tRNA by promoting its recognition by IF2 and preventing the misappropriation of this tRNA by the elongation apparatus. The sequence is that of Methionyl-tRNA formyltransferase from Levilactobacillus brevis (strain ATCC 367 / BCRC 12310 / CIP 105137 / JCM 1170 / LMG 11437 / NCIMB 947 / NCTC 947) (Lactobacillus brevis).